The following is an 835-amino-acid chain: uncharacterized protein (835 aa).

Disordered stretches follow at residues 1 to 38 (MKTS…VGSR), 317 to 477 (DFDL…QSGR), 489 to 668 (SLSK…IKRR), 721 to 750 (DLEN…VSSF), and 810 to 835 (QEQQ…ELMF). Low complexity-rich tracts occupy residues 7-37 (STVP…TVGS), 328-351 (NNNN…TPTT), and 361-395 (SSTN…SGSS). Polar residues-rich tracts occupy residues 396-406 (IGNRTEVSSSI) and 415-424 (IIRSKSSLGT). The span at 432-442 (GGSGGGGGGGM) shows a compositional bias: gly residues. Polar residues predominate over residues 449-477 (PISKTPTTMITKTASSSSPNLATSTQSGR). Positions 489–510 (SLSKQSSSSNLTRSLPPIIKSP) are enriched in low complexity. Pro residues predominate over residues 511 to 521 (ISPPGPTPPAP). Low complexity predominate over residues 522–629 (TLTKSKSTPS…STTSSATKKS (108 aa)). Residues 631–640 (ITKTNPTDEQ) are compositionally biased toward polar residues. 2 stretches are compositionally biased toward low complexity: residues 641 to 664 (TTTP…STSS) and 724 to 750 (NNNN…VSSF). Acidic residues predominate over residues 826-835 (ILDEDDELMF).

This is an uncharacterized protein from Dictyostelium discoideum (Social amoeba).